Reading from the N-terminus, the 484-residue chain is Arginyl-tRNA--protein transferase 1 (484 aa).

The protein belongs to the R-transferase family.

The enzyme catalyses an N-terminal L-alpha-aminoacyl-[protein] + L-arginyl-tRNA(Arg) = an N-terminal L-arginyl-L-aminoacyl-[protein] + tRNA(Arg) + H(+). Its function is as follows. Involved in the post-translational conjugation of arginine to the N-terminal aspartate or glutamate of a protein. This arginylation is required for degradation of the protein via the ubiquitin pathway. Does not arginylate cysteine residues. The protein is Arginyl-tRNA--protein transferase 1 (Ate1) of Drosophila melanogaster (Fruit fly).